A 466-amino-acid chain; its full sequence is Membrane-bound lytic murein transglycosylase F (466 aa).

Residues 1–24 (MKRFKLNYFIIGLIAILLTWSLWT) form the signal peptide. The tract at residues 25–268 (TVPWRNAHQD…RLEEKYLGHV (244 aa)) is non-LT domain. The tract at residues 269–466 (GGFDYVDTKT…KEKKAAQLAD (198 aa)) is LT domain. Residue glutamate 313 is part of the active site.

The protein in the N-terminal section; belongs to the bacterial solute-binding protein 3 family. It in the C-terminal section; belongs to the transglycosylase Slt family.

It localises to the cell outer membrane. It carries out the reaction Exolytic cleavage of the (1-&gt;4)-beta-glycosidic linkage between N-acetylmuramic acid (MurNAc) and N-acetylglucosamine (GlcNAc) residues in peptidoglycan, from either the reducing or the non-reducing ends of the peptidoglycan chains, with concomitant formation of a 1,6-anhydrobond in the MurNAc residue.. Functionally, murein-degrading enzyme that degrades murein glycan strands and insoluble, high-molecular weight murein sacculi, with the concomitant formation of a 1,6-anhydromuramoyl product. Lytic transglycosylases (LTs) play an integral role in the metabolism of the peptidoglycan (PG) sacculus. Their lytic action creates space within the PG sacculus to allow for its expansion as well as for the insertion of various structures such as secretion systems and flagella. This chain is Membrane-bound lytic murein transglycosylase F, found in Sodalis glossinidius (strain morsitans).